The chain runs to 256 residues: 3-hydroxy-5-phosphonooxypentane-2,4-dione thiolase (256 aa).

Lysine 168 functions as the Schiff-base intermediate with substrate in the catalytic mechanism.

Belongs to the DeoC/FbaB aldolase family. In terms of assembly, homodecamer.

It localises to the cytoplasm. It catalyses the reaction dihydroxyacetone phosphate + acetyl-CoA = 3-hydroxy-2,4-dioxopentyl phosphate + CoA. Involved in the degradation of phospho-AI-2, thereby terminating induction of the lsr operon and closing the AI-2 signaling cycle. Catalyzes the transfer of an acetyl moiety from 3-hydroxy-5-phosphonooxypentane-2,4-dione to CoA to form glycerone phosphate and acetyl-CoA. The sequence is that of 3-hydroxy-5-phosphonooxypentane-2,4-dione thiolase (lsrF) from Shigella flexneri.